The sequence spans 732 residues: Catalase-peroxidase (732 aa).

The interval 1-23 is disordered; sequence MSEQSKCPVTGRTAGHPVAGGGM. The segment at residues 97–220 is a cross-link (tryptophyl-tyrosyl-methioninium (Trp-Tyr) (with M-246)); that stretch reads WHSAGTYRTS…LAAVQMGLIY (124 aa). The active-site Proton acceptor is the H98. The segment at residues 220-246 is a cross-link (tryptophyl-tyrosyl-methioninium (Tyr-Met) (with W-97)); sequence YVNPEGPDGNPDPVAAGRDIRETFARM. H261 contributes to the heme b binding site.

This sequence belongs to the peroxidase family. Peroxidase/catalase subfamily. Homodimer or homotetramer. Heme b is required as a cofactor. Formation of the three residue Trp-Tyr-Met cross-link is important for the catalase, but not the peroxidase activity of the enzyme.

It carries out the reaction H2O2 + AH2 = A + 2 H2O. It catalyses the reaction 2 H2O2 = O2 + 2 H2O. Functionally, bifunctional enzyme with both catalase and broad-spectrum peroxidase activity. The protein is Catalase-peroxidase of Chlorobium limicola (strain DSM 245 / NBRC 103803 / 6330).